Here is a 1107-residue protein sequence, read N- to C-terminus: OTU domain-containing protein 4 (1107 aa).

Position 1 is an N-acetylmethionine (methionine 1). Residues leucine 34–isoleucine 155 form the OTU domain. Residues valine 39–cysteine 45 are cys-loop. Residue aspartate 42 is part of the active site. Catalysis depends on cysteine 45, which acts as the Nucleophile. The variable-loop stretch occupies residues leucine 94–valine 104. At tyrosine 120 the chain carries Phosphotyrosine. Phosphoserine occurs at positions 126 and 128. Threonine 131 is modified (phosphothreonine). The interval phenylalanine 143–histidine 148 is his-loop. The active site involves histidine 148. 4 positions are modified to phosphoserine: serine 166, serine 199, serine 202, and serine 204. A compositionally biased stretch (acidic residues) spans glutamate 195–aspartate 206. Disordered regions lie at residues glutamate 195–leucine 239 and lysine 322–histidine 431. The segment covering glycine 226–serine 236 has biased composition (polar residues). Phosphoserine is present on serine 340. Over residues serine 392–serine 403 the composition is skewed to low complexity. Over residues arginine 419–histidine 431 the composition is skewed to basic and acidic residues. Tyrosine 438 carries the phosphotyrosine modification. Serine 442 carries the post-translational modification Phosphoserine. The residue at position 459 (tyrosine 459) is a Phosphotyrosine. Residues proline 470 to asparagine 568 form a disordered region. Residues serine 473–asparagine 486 are compositionally biased toward low complexity. The span at histidine 495–glutamate 528 shows a compositional bias: basic and acidic residues. Residues serine 544 and serine 895 each carry the phosphoserine modification. The segment at leucine 918–threonine 1107 is disordered. A compositionally biased stretch (basic and acidic residues) spans asparagine 963–threonine 994. Residues serine 1000, serine 1005, serine 1016, and serine 1017 each carry the phosphoserine modification. The segment covering serine 1032–glycine 1041 has biased composition (polar residues). Serine 1042 carries the phosphoserine modification. 2 stretches are compositionally biased toward basic and acidic residues: residues valine 1060–glutamine 1079 and tyrosine 1089–threonine 1107.

Interacts with MYD88; the interaction is direct. Interacts with ALKBH3; the interaction is direct. Interacts with USP7; the interaction is direct. Interacts with USP9X; the interaction is direct. Post-translationally, phosphorylation at Ser-202 and Ser-204 activates 'Lys-63'-specific deubiquitinase activity. Induced upon stimulation with IL1B.

It is found in the cytoplasm. The protein resides in the nucleus. The catalysed reaction is Thiol-dependent hydrolysis of ester, thioester, amide, peptide and isopeptide bonds formed by the C-terminal Gly of ubiquitin (a 76-residue protein attached to proteins as an intracellular targeting signal).. With respect to regulation, phosphorylation on Ser-202 and Ser-204 induces 'Lys-63'-specific deubiquitinase activity. In terms of biological role, deubiquitinase which hydrolyzes the isopeptide bond between the ubiquitin C-terminus and the lysine epsilon-amino group of the target protein. May negatively regulate inflammatory and pathogen recognition signaling in innate immune response. Upon phosphorylation at Ser-202 and Ser-204 residues, via IL-1 receptor and Toll-like receptor signaling pathway, specifically deubiquitinates 'Lys-63'-polyubiquitinated MYD88 adapter protein triggering down-regulation of NF-kappa-B-dependent transcription of inflammatory mediators. Independently of the catalytic activity, acts as a scaffold for alternative deubiquitinases to assemble specific deubiquitinase-substrate complexes. Associates with USP7 and USP9X deubiquitinases to stabilize alkylation repair enzyme ALKBH3, thereby promoting the repair of alkylated DNA lesions. This is OTU domain-containing protein 4 from Mus musculus (Mouse).